Reading from the N-terminus, the 227-residue chain is ATP-dependent dethiobiotin synthetase BioD (227 aa).

13-18 (DAGKTT) contacts ATP. Thr17 contacts Mg(2+). Lys38 is an active-site residue. ATP contacts are provided by residues Asp55, 118–121 (EGAG), 178–179 (NR), 207–209 (PYI), and Glu214. Positions 55 and 118 each coordinate Mg(2+).

Belongs to the dethiobiotin synthetase family. As to quaternary structure, homodimer. Mg(2+) serves as cofactor.

Its subcellular location is the cytoplasm. The catalysed reaction is (7R,8S)-7,8-diammoniononanoate + CO2 + ATP = (4R,5S)-dethiobiotin + ADP + phosphate + 3 H(+). It functions in the pathway cofactor biosynthesis; biotin biosynthesis; biotin from 7,8-diaminononanoate: step 1/2. Catalyzes a mechanistically unusual reaction, the ATP-dependent insertion of CO2 between the N7 and N8 nitrogen atoms of 7,8-diaminopelargonic acid (DAPA, also called 7,8-diammoniononanoate) to form a ureido ring. This Tolumonas auensis (strain DSM 9187 / NBRC 110442 / TA 4) protein is ATP-dependent dethiobiotin synthetase BioD.